Here is a 145-residue protein sequence, read N- to C-terminus: LIRP (145 aa).

The or 22 signal peptide spans 1 to 19 (MWKLCLRLLAVLAVCLSTA). 2 consecutive propeptides follow at residues 20-33 (TQAQ…SPKR) and 117-122 (FRRRTR). Disulfide bonds link C44–C129, C56–C142, and C128–C133.

This sequence belongs to the insulin family. As to quaternary structure, heterodimer of a B chain and an A chain linked by two disulfide bonds.

It is found in the secreted. In Locusta migratoria (Migratory locust), this protein is LIRP.